Consider the following 221-residue polypeptide: Iron-sulfur cluster repair protein YtfE (221 aa).

It belongs to the RIC family. YtfE subfamily. In terms of assembly, homodimer.

It localises to the cytoplasm. Its function is as follows. Di-iron-containing protein involved in the repair of iron-sulfur clusters damaged by oxidative and nitrosative stress conditions. The protein is Iron-sulfur cluster repair protein YtfE of Cronobacter sakazakii (strain ATCC BAA-894) (Enterobacter sakazakii).